Consider the following 476-residue polypeptide: Glutamate--tRNA ligase (476 aa).

Positions 9-19 match the 'HIGH' region motif; it reads PSPTGLFHIGT. Positions 248 to 252 match the 'KMSKS' region motif; the sequence is KLSKR. Position 251 (lysine 251) interacts with ATP.

The protein belongs to the class-I aminoacyl-tRNA synthetase family. Glutamate--tRNA ligase type 1 subfamily. As to quaternary structure, monomer.

It is found in the cytoplasm. The catalysed reaction is tRNA(Glu) + L-glutamate + ATP = L-glutamyl-tRNA(Glu) + AMP + diphosphate. Catalyzes the attachment of glutamate to tRNA(Glu) in a two-step reaction: glutamate is first activated by ATP to form Glu-AMP and then transferred to the acceptor end of tRNA(Glu). In Prochlorococcus marinus (strain MIT 9301), this protein is Glutamate--tRNA ligase.